The following is a 105-amino-acid chain: Large ribosomal subunit protein uL24 (105 aa).

It belongs to the universal ribosomal protein uL24 family. As to quaternary structure, part of the 50S ribosomal subunit.

One of two assembly initiator proteins, it binds directly to the 5'-end of the 23S rRNA, where it nucleates assembly of the 50S subunit. Functionally, one of the proteins that surrounds the polypeptide exit tunnel on the outside of the subunit. In Thioalkalivibrio sulfidiphilus (strain HL-EbGR7), this protein is Large ribosomal subunit protein uL24.